A 236-amino-acid chain; its full sequence is MNPVHILAKKGEVAERVLVVGDPGRARLLSTLLQNPKLTNENRGFLVYTGKYNGETVSIATHGIGGPSIAIVLEELAMLGANVFIRYGTTGALVPYINLGEYIIVTGASYNQGGLFYQYLRDNACVASTPDFELTNKLVTSFSKRNLKYYVGNVFSSDAFYAEDEEFVKKWSSRGNIAVEMECATLFTLSKVKGWKSATVLVVSDNLAKGGIWITKEELEKSVMDGAKAVLDTLTS.

His5 is a binding site for a purine D-ribonucleoside. Residues Gly21, Arg25, Arg43, and 86–89 (RYGT) each bind phosphate. Residues Glu163, 180–182 (EME), and 204–205 (SD) contribute to the a purine D-ribonucleoside site.

This sequence belongs to the PNP/UDP phosphorylase family. As to quaternary structure, homohexamer; disulfide-linked. Trimer of homodimers, with three symmetric intersubunit disulfide bonds linking the dimers to one another.

It catalyses the reaction S-methyl-5'-thioadenosine + phosphate = 5-(methylsulfanyl)-alpha-D-ribose 1-phosphate + adenine. It carries out the reaction a purine D-ribonucleoside + phosphate = a purine nucleobase + alpha-D-ribose 1-phosphate. The enzyme catalyses a purine 2'-deoxy-D-ribonucleoside + phosphate = a purine nucleobase + 2-deoxy-alpha-D-ribose 1-phosphate. It participates in purine metabolism; purine nucleoside salvage. Its function is as follows. Cleavage of guanosine or inosine to respective bases and sugar-1-phosphate molecules. Cleaves inosine, guanosine, and adenosine with a better efficiency than MTA. This is Purine nucleoside phosphorylase from Saccharolobus solfataricus (strain ATCC 35092 / DSM 1617 / JCM 11322 / P2) (Sulfolobus solfataricus).